The sequence spans 194 residues: Inner membrane-spanning protein YciB (194 aa).

Helical transmembrane passes span 1-21 (MKLL…KTTN), 49-69 (EKMH…TILF), 77-97 (WKPS…GWVS), 120-140 (LNYS…YVAY), and 150-170 (FKLF…GVYI).

It belongs to the YciB family.

The protein resides in the cell inner membrane. Its function is as follows. Plays a role in cell envelope biogenesis, maintenance of cell envelope integrity and membrane homeostasis. In Hahella chejuensis (strain KCTC 2396), this protein is Inner membrane-spanning protein YciB.